Reading from the N-terminus, the 124-residue chain is MLNIAIAVFIGGGLGSVLRWLISYRLNSLFPHFATGTLVANCIGAFIIAFGIAWFSKAPNIDPIWKIMLTTGFCGGLTTFSTFSVEVVALFNEGRIGWALGTMGANLAGSFLMTAFAFWLLREM.

The next 4 membrane-spanning stretches (helical) occupy residues 2 to 22 (LNIAIAVFIGGGLGSVLRWLI), 35 to 55 (TGTLVANCIGAFIIAFGIAWF), 71 to 91 (TGFCGGLTTFSTFSVEVVALF), and 100 to 120 (LGTMGANLAGSFLMTAFAFWL). Residues glycine 75 and threonine 78 each coordinate Na(+).

It belongs to the fluoride channel Fluc/FEX (TC 1.A.43) family.

The protein resides in the cell inner membrane. The catalysed reaction is fluoride(in) = fluoride(out). Its activity is regulated as follows. Na(+) is not transported, but it plays an essential structural role and its presence is essential for fluoride channel function. Functionally, fluoride-specific ion channel. Important for reducing fluoride concentration in the cell, thus reducing its toxicity. The protein is Fluoride-specific ion channel FluC of Proteus mirabilis (strain HI4320).